The sequence spans 174 residues: SUSHI domain-containing protein E3 (174 aa).

The first 20 residues, 1 to 20 (MATEVQFACALVVLLGCGYA), serve as a signal peptide directing secretion. Residues 35–97 (QNCTTYPSIE…WTNGPPSCVK (63 aa)) enclose the Sushi domain. 2 cysteine pairs are disulfide-bonded: cysteine 37-cysteine 78 and cysteine 64-cysteine 95. Over residues 108 to 127 (STSTTPVTTGTFPDPQNTTH) the composition is skewed to low complexity. The interval 108–133 (STSTTPVTTGTFPDPQNTTHPTHHTV) is disordered. The chain crosses the membrane as a helical span at residues 145–165 (FGYTPWAIITLVVIILLVVWI).

The protein resides in the host membrane. The polypeptide is SUSHI domain-containing protein E3 (E3) (Equine herpesvirus 2 (strain 86/87) (EHV-2)).